We begin with the raw amino-acid sequence, 375 residues long: Succinyl-diaminopimelate desuccinylase (375 aa).

Zn(2+) is bound at residue His66. Asp68 is an active-site residue. Asp99 serves as a coordination point for Zn(2+). Catalysis depends on Glu133, which acts as the Proton acceptor. Positions 134, 162, and 348 each coordinate Zn(2+).

The protein belongs to the peptidase M20A family. DapE subfamily. As to quaternary structure, homodimer. Zn(2+) is required as a cofactor. Requires Co(2+) as cofactor.

It carries out the reaction N-succinyl-(2S,6S)-2,6-diaminopimelate + H2O = (2S,6S)-2,6-diaminopimelate + succinate. The protein operates within amino-acid biosynthesis; L-lysine biosynthesis via DAP pathway; LL-2,6-diaminopimelate from (S)-tetrahydrodipicolinate (succinylase route): step 3/3. Its function is as follows. Catalyzes the hydrolysis of N-succinyl-L,L-diaminopimelic acid (SDAP), forming succinate and LL-2,6-diaminopimelate (DAP), an intermediate involved in the bacterial biosynthesis of lysine and meso-diaminopimelic acid, an essential component of bacterial cell walls. This is Succinyl-diaminopimelate desuccinylase from Escherichia coli O157:H7.